A 141-amino-acid polypeptide reads, in one-letter code: Nucleoside triphosphatase NudI (141 aa).

Residues 1 to 141 (MRQRTIVCPL…RKTLRLKGLL (141 aa)) form the Nudix hydrolase domain. The short motif at 38–59 (GGVESGERIEEALRREIREELG) is the Nudix box element.

The protein belongs to the Nudix hydrolase family. NudI subfamily. In terms of assembly, monomer. Mg(2+) is required as a cofactor.

It carries out the reaction a ribonucleoside 5'-triphosphate + H2O = a ribonucleoside 5'-phosphate + diphosphate + H(+). The catalysed reaction is a 2'-deoxyribonucleoside 5'-triphosphate + H2O = a 2'-deoxyribonucleoside 5'-phosphate + diphosphate + H(+). It catalyses the reaction dUTP + H2O = dUMP + diphosphate + H(+). The enzyme catalyses dTTP + H2O = dTMP + diphosphate + H(+). It carries out the reaction dCTP + H2O = dCMP + diphosphate + H(+). Its function is as follows. Catalyzes the hydrolysis of nucleoside triphosphates, with a preference for pyrimidine deoxynucleoside triphosphates (dUTP, dTTP and dCTP). This Shigella flexneri serotype 5b (strain 8401) protein is Nucleoside triphosphatase NudI.